A 400-amino-acid chain; its full sequence is CCA-adding enzyme (400 aa).

Gly-28 and Arg-31 together coordinate ATP. CTP-binding residues include Gly-28 and Arg-31. Mg(2+) is bound by residues Asp-41 and Asp-43. Residues Arg-112, Asp-155, Arg-158, Arg-161, and Arg-164 each coordinate ATP. 5 residues coordinate CTP: Arg-112, Asp-155, Arg-158, Arg-161, and Arg-164.

This sequence belongs to the tRNA nucleotidyltransferase/poly(A) polymerase family. Bacterial CCA-adding enzyme type 3 subfamily. As to quaternary structure, homodimer. The cofactor is Mg(2+).

It catalyses the reaction a tRNA precursor + 2 CTP + ATP = a tRNA with a 3' CCA end + 3 diphosphate. The enzyme catalyses a tRNA with a 3' CCA end + 2 CTP + ATP = a tRNA with a 3' CCACCA end + 3 diphosphate. Catalyzes the addition and repair of the essential 3'-terminal CCA sequence in tRNAs without using a nucleic acid template. Adds these three nucleotides in the order of C, C, and A to the tRNA nucleotide-73, using CTP and ATP as substrates and producing inorganic pyrophosphate. tRNA 3'-terminal CCA addition is required both for tRNA processing and repair. Also involved in tRNA surveillance by mediating tandem CCA addition to generate a CCACCA at the 3' terminus of unstable tRNAs. While stable tRNAs receive only 3'-terminal CCA, unstable tRNAs are marked with CCACCA and rapidly degraded. This chain is CCA-adding enzyme, found in Staphylococcus aureus (strain MSSA476).